Consider the following 494-residue polypeptide: Glycerol kinase (494 aa).

Thr12 serves as a coordination point for ADP. The ATP site is built by Thr12, Thr13, and Ser14. Residue Thr12 coordinates sn-glycerol 3-phosphate. Arg16 contacts ADP. Sn-glycerol 3-phosphate is bound by residues Arg82, Glu83, Tyr134, and Asp244. The glycerol site is built by Arg82, Glu83, Tyr134, Asp244, and Gln245. Residues Thr266 and Gly309 each contribute to the ADP site. Thr266, Gly309, Gln313, and Gly410 together coordinate ATP. Residues Gly410 and Asn414 each coordinate ADP.

Belongs to the FGGY kinase family. In terms of assembly, homotetramer and homodimer (in equilibrium).

It catalyses the reaction glycerol + ATP = sn-glycerol 3-phosphate + ADP + H(+). It functions in the pathway polyol metabolism; glycerol degradation via glycerol kinase pathway; sn-glycerol 3-phosphate from glycerol: step 1/1. Its activity is regulated as follows. Activated by phosphorylation and inhibited by fructose 1,6-bisphosphate (FBP). Functionally, key enzyme in the regulation of glycerol uptake and metabolism. Catalyzes the phosphorylation of glycerol to yield sn-glycerol 3-phosphate. The protein is Glycerol kinase of Desulfitobacterium hafniense (strain DSM 10664 / DCB-2).